We begin with the raw amino-acid sequence, 522 residues long: F-box only protein 7 (522 aa).

Residues 1–88 (MRLRVRLLKR…QDDIPAPNIP (88 aa)) form a ubiquitin-like region. The interval 85-144 (PNIPSSTDSEHSSLQNNEQPSLATSSNQTSMQDEQPSDSFQGQAAQSGVWNDDSMLGPSQ) is disordered. Polar residues predominate over residues 87–133 (IPSSTDSEHSSLQNNEQPSLATSSNQTSMQDEQPSDSFQGQAAQSGV). The tract at residues 92-129 (DSEHSSLQNNEQPSLATSSNQTSMQDEQPSDSFQGQAA) is important for interaction with PINK1. The segment at 129–169 (AQSGVWNDDSMLGPSQNFEAESIQDNAHMAEGTGFYPSEPM) is important for interaction with CDK6. An important for dimerization and interaction with PSMF1 region spans residues 180–324 (PHSLETLYQS…PLLAFTRQAL (145 aa)). The F-box domain maps to 329–375 (VFGLVVLPLELKLRIFRLLDVRSVLSLSAVCRDLFTASNDPLLWRFL). Positions 381 to 522 (RDNTVRVQDT…RPTDGRLSFM (142 aa)) are important for interaction with CDK6. An omega-N-methylarginine mark is found at Arg-432 and Arg-451. Residues 481-484 (RFDP) carry the RFDP motif motif. The tract at residues 483–522 (DPVGPLPGPNPILPGRGGPNDRFPFRPSRGRPTDGRLSFM) is disordered. Arg-518 is modified (asymmetric dimethylarginine).

In terms of assembly, part of the SCF (SKP1-CUL1-F-box) E3 ubiquitin-protein ligase complex SCF(FBXO7) formed of CUL1, SKP1, RBX1 and FBXO7. Interacts via its C-terminal proline-rich region with DLGAP5. Interacts with BIRC2. Interacts with CDK6 and promotes its interaction with D-type cyclin. Interacts with PSMF1. Interacts (via the N-terminal Ubl domain) with PRKN. Interact (via N-terminal region) with PINK1. As to quaternary structure, interact (via N-terminal region) with PINK1.

It is found in the cytoplasm. The protein resides in the nucleus. The protein localises to the mitochondrion. Its subcellular location is the cytosol. It participates in protein modification; protein ubiquitination. Its function is as follows. Substrate recognition component of a SCF (SKP1-CUL1-F-box protein) E3 ubiquitin-protein ligase complex which mediates the ubiquitination and subsequent proteasomal degradation of target proteins and plays a role in several biological processes such as cell cycle, cell proliferation, or maintenance of chromosome stability. Recognizes and ubiquitinates BIRC2 and the cell cycle regulator DLGAP5. Plays a role downstream of PINK1 in the clearance of damaged mitochondria via selective autophagy (mitophagy) by targeting PRKN to dysfunctional depolarized mitochondria. Promotes MFN1 ubiquitination. Mediates the ubiquitination and proteasomal degradation of UXT isoform 2, thereby impairing the NF-kappa-B signaling pathway. Inhibits NF-kappa-B pathway also by promoting the ubiquitination of TRAF2. Affects the assembly state and activity of the proteasome in the cells including neurons by ubiquitinating the proteasomal subunit PSMA2 via 'Lys-63'-linked polyubiquitin chains. Promotes 'Lys-48'-linked polyubiquitination SIRT7, leading to the hydrogen peroxide-induced cell death. The chain is F-box only protein 7 (FBXO7) from Homo sapiens (Human).